Consider the following 414-residue polypeptide: Serine/threonine transporter SstT (414 aa).

The next 8 helical transmembrane spans lie at 16 to 36 (GSLV…AWIS), 46 to 66 (LGTL…LMLV), 84 to 104 (ILFL…VFSF), 143 to 163 (ALLN…GFAL), 180 to 200 (AVTF…FGLV), 219 to 239 (LVVL…LLVF), 300 to 320 (MAGA…TLGV), and 332 to 352 (VVAS…LLLI).

The protein belongs to the dicarboxylate/amino acid:cation symporter (DAACS) (TC 2.A.23) family.

The protein localises to the cell inner membrane. It carries out the reaction L-serine(in) + Na(+)(in) = L-serine(out) + Na(+)(out). The enzyme catalyses L-threonine(in) + Na(+)(in) = L-threonine(out) + Na(+)(out). In terms of biological role, involved in the import of serine and threonine into the cell, with the concomitant import of sodium (symport system). The polypeptide is Serine/threonine transporter SstT (Salmonella schwarzengrund (strain CVM19633)).